A 211-amino-acid polypeptide reads, in one-letter code: Transcription factor bHLH150 (211 aa).

Positions 1-15 (MSSEQGNGSNPSTSP) are enriched in polar residues. Positions 1-23 (MSSEQGNGSNPSTSPEVEGTKTI) are disordered. Residues 135 to 184 (AIRGSGGSGRRRKLSAVGNRVRVLGGLVPGCRRTALPELLDETADYIAAL) enclose the bHLH domain.

In terms of assembly, homodimer. Interacts with PRE3 and ASK7. In terms of processing, phosphorylated by ASK7.

The protein localises to the nucleus. Functionally, atypical bHLH transcription factor probably unable to bind DNA. Negatively regulates brassinosteroid signaling. The sequence is that of Transcription factor bHLH150 (BHLH150) from Arabidopsis thaliana (Mouse-ear cress).